A 391-amino-acid polypeptide reads, in one-letter code: Aminoacetone oxidase (391 aa).

Residues Ala-14, Glu-33, Ile-134, Glu-362, Asn-374, and Ile-375 each contribute to the FAD site.

This sequence belongs to the BaiN/RdsA family. In terms of assembly, monomer. The cofactor is FAD.

Flavoprotein that probably catalyzes the condensation of two molecules of aminoacetone to yield 3,6-dimethyl-2,5-dihydropyrazine, which is subsequently oxidized to 2,5-dimethylpyrazine. It could be involved in a microbial defense mechanism related to aminoacetone catabolism through a pathway yielding dimethylpyrazine derivatives instead of methylglyoxal. It has also low aminoacetone oxidase activity, and can produce hydrogen peroxide from aminoacetone. In addition, it shows very low L-amino acid oxidase activity, and can produce hydrogen peroxide from peptone and from seven amino acids, L-aspartate, L-tryptophan, L-lysine, L-isoleucine, L-arginine, L-asparagine and L-glutamine. It cannot use L-malate, oxaloacetate or alpha-aminobutyrate. Plays a role in antioxidant defense. This is Aminoacetone oxidase from Streptococcus cristatus.